Consider the following 220-residue polypeptide: 7-cyano-7-deazaguanine synthase (220 aa).

Residue 10-20 (FSGGQDSTTCL) coordinates ATP. 4 residues coordinate Zn(2+): C186, C195, C198, and C201.

This sequence belongs to the QueC family. As to quaternary structure, homodimer. The cofactor is Zn(2+).

It carries out the reaction 7-carboxy-7-deazaguanine + NH4(+) + ATP = 7-cyano-7-deazaguanine + ADP + phosphate + H2O + H(+). It functions in the pathway purine metabolism; 7-cyano-7-deazaguanine biosynthesis. In terms of biological role, catalyzes the ATP-dependent conversion of 7-carboxy-7-deazaguanine (CDG) to 7-cyano-7-deazaguanine (preQ(0)). The sequence is that of 7-cyano-7-deazaguanine synthase from Bacillus cereus (strain AH187).